The primary structure comprises 362 residues: Lipoprotein p35 (362 aa).

A signal peptide spans 1 to 30 (MKIKKIKLLKALALTGAFGIVATVPVIVSS). A lipid anchor (N-palmitoyl cysteine) is attached at Cys-31. Residue Cys-31 is the site of S-diacylglycerol cysteine attachment. A disordered region spans residues 33-53 (STSENNGNGNGNGGTDGNTQQ).

Belongs to the p35 lipoprotein family. Post-translationally, the N-terminus is blocked.

It is found in the cell membrane. Its function is as follows. Major M.penetrans antigen. The sequence is that of Lipoprotein p35 from Malacoplasma penetrans (strain HF-2) (Mycoplasma penetrans).